The sequence spans 1025 residues: Retinoblastoma-related protein (1025 aa).

A disordered region spans residues 1–20; the sequence is MEDHPPKPSIPTADASLSNH. Residues 422–623 form a domain A region; the sequence is TPVTTAMTTA…EKGSSMYNSL (202 aa). The segment at 422–875 is pocket; the sequence is TPVTTAMTTA…NEIFIPAVKP (454 aa). The spacer stretch occupies residues 624–744; it reads TVARPALSAE…PGAGGETCAE (121 aa). The tract at residues 745–875 is domain B; sequence TAINVFFSKI…NEIFIPAVKP (131 aa).

It belongs to the retinoblastoma protein (RB) family.

It is found in the nucleus. Regulator of biological processes that recruits a histone deacetylase to control gene transcription. May play a role in the entry into mitosis, negatively regulating the cell proliferation. Formation of stable complexes with geminiviridae replication-associated proteins may create a cellular environment which favors viral DNA replication. The polypeptide is Retinoblastoma-related protein (pRB) (Camellia sinensis (Tea plant)).